Here is a 478-residue protein sequence, read N- to C-terminus: H(+)/Cl(-) exchange transporter ClcA (478 aa).

At 1–32 the chain is on the cytoplasmic side; the sequence is MTHSTQQLSPEGVAEGKRGRLIRELVNRDKTP. Residues 33–69 traverse the membrane as a helical segment; sequence LIILIMAAVVGVVTGLLGVAFDRGVDWVQQQRLLALA. The Periplasmic segment spans residues 70 to 76; sequence NVADYAL. Residues 77–100 traverse the membrane as a helical segment; the sequence is LVWPLAFIMSALLAMMGYFLVSRF. The Selectivity filter part_1 signature appears at 106–110; it reads GSGIP. Residue Ser-107 participates in chloride binding. The segment at residues 109–116 is an intramembrane region (helical); the sequence is IPEIEGAM. Over 117-123 the chain is Cytoplasmic; the sequence is EEMRPVR. Transmembrane regions (helical) follow at residues 124–141 and 148–166; these read WWRV…TLGA and EGPM…VDIF. Positions 146-150 match the Selectivity filter part_2 motif; it reads GREGP. Topologically, residues 167–176 are cytoplasmic; it reads RLRSPEARHS. 2 consecutive intramembrane regions (helical) follow at residues 177–189 and 193–201; these read LLAT…LSAA and PLAGILFVI. Residues 202 to 214 lie on the Cytoplasmic side of the membrane; sequence EEMRSQFRYSLVS. A helical membrane pass occupies residues 215 to 232; the sequence is IKAVFIGVITSTIVYRYF. The Periplasmic segment spans residues 233-252; that stretch reads NGERAIIEVGKLSDAPLNTL. The helical transmembrane segment at 253–281 threads the bilayer; sequence WLYLLLGIIFGAVGVIFNALIFRTQDMFV. Residues 282-287 are Cytoplasmic-facing; it reads RFHGGD. A helical membrane pass occupies residues 288-309; sequence WRKLVLIGGLLGGMCGLLALLH. Topologically, residues 310–329 are periplasmic; that stretch reads GNAVGGGFALIPIAAAGNFS. The next 2 membrane-spanning stretches (helical) occupy residues 330 to 349 and 355 to 376; these read IGML…LCFG and GIFA…LSCA. The short motif at 355–359 is the Selectivity filter part_3 element; the sequence is GIFAP. 2 residues coordinate chloride: Ile-356 and Phe-357. Residues 377–386 are Periplasmic-facing; that stretch reads HFFPQYGIEA. Residues 387–401 constitute an intramembrane region (helical); the sequence is GTFAIAGMGALFAAS. An intramembrane region (note=Loop between two helices) is located at residues 402-404; that stretch reads VRA. Residues 405–416 constitute an intramembrane region (helical); the sequence is PLTGIVLVLEMT. The segment at residues 417-421 is an intramembrane region (note=Loop between two helices); that stretch reads DNYQL. The chain crosses the membrane as a helical span at residues 422–438; that stretch reads ILPMIVTCLGATLIAQF. At 439 to 478 the chain is on the cytoplasmic side; the sequence is MGGKPLYSAILARTLAKQEQARATVIAQEPAVENTPQIGK. Chloride is bound at residue Tyr-445.

This sequence belongs to the chloride channel (TC 2.A.49) family. ClcA subfamily. Homodimer.

The protein resides in the cell inner membrane. It catalyses the reaction 2 chloride(in) + H(+)(out) = 2 chloride(out) + H(+)(in). Functionally, proton-coupled chloride transporter. Functions as antiport system and exchanges two chloride ions for 1 proton. Probably acts as an electrical shunt for an outwardly-directed proton pump that is linked to amino acid decarboxylation, as part of the extreme acid resistance (XAR) response. In Yersinia pestis bv. Antiqua (strain Antiqua), this protein is H(+)/Cl(-) exchange transporter ClcA.